The sequence spans 779 residues: Acyl-homoserine lactone acylase PvdQ (779 aa).

The signal sequence occupies residues 1-25; the sequence is MIISRPLCGFVFAGLSFAVILPAQA. A propeptide spans 202–223 (spacer peptide); that stretch reads SQQVQALQLAAVRNQRFALERG. The active-site Nucleophile is the Ser224. Polar residues predominate over residues 731–746; sequence ESSNPQSAHSSDQTEA. The segment at 731 to 752 is disordered; sequence ESSNPQSAHSSDQTEAFSKKQW.

It belongs to the peptidase S45 family. As to quaternary structure, heterodimer of an alpha subunit and a beta subunit processed from the same precursor.

Its subcellular location is the periplasm. The enzyme catalyses an N-acyl-L-homoserine lactone + H2O = L-homoserine lactone + a carboxylate. In terms of biological role, catalyzes the deacylation of acyl-homoserine lactone (AHL or acyl-HSL), releasing homoserine lactone (HSL) and the corresponding fatty acid. Possesses a specificity for the degradation of long-chain acyl-HSLs (side chains of 11 to 14 carbons in length). The sequence is that of Acyl-homoserine lactone acylase PvdQ (pvdQ) from Pseudomonas savastanoi pv. phaseolicola (strain 1448A / Race 6) (Pseudomonas syringae pv. phaseolicola (strain 1448A / Race 6)).